The chain runs to 94 residues: Large ribosomal subunit protein eL42 (94 aa).

Cysteine 11, cysteine 14, cysteine 71, and cysteine 74 together coordinate Zn(2+). The segment at 11-74 adopts a C4-type zinc-finger fold; that stretch reads CPFCKRHTIH…LDLRFRCTVC (64 aa).

It belongs to the eukaryotic ribosomal protein eL42 family. In terms of assembly, part of the 50S ribosomal subunit. Zn(2+) is required as a cofactor.

Its function is as follows. Binds to the 23S rRNA. In Pyrococcus abyssi (strain GE5 / Orsay), this protein is Large ribosomal subunit protein eL42.